The primary structure comprises 374 residues: Dispase autolysis-inducing protein (374 aa).

The N-terminal stretch at 1–26 is a signal peptide; the sequence is MKRMGWAVTAAVTTIVLAQSSLAAQA.

It localises to the secreted. Its function is as follows. Induces autolysis of dispase and thermolysin. This is Dispase autolysis-inducing protein (daip) from Streptomyces mobaraensis (Streptoverticillium mobaraense).